The following is a 63-amino-acid chain: Parvalbumin alpha (63 aa).

EF-hand domains are found at residues 28-38 and 39-63; these read IEEEELGLILK and VLLAAGDKDGDGKIGVDEFVTLVSE. Residues E29, E32, D45, D47, D49, K51, and E56 each coordinate Ca(2+).

In terms of tissue distribution, detected in muscle and cutaneous mucus. In the skin, detected in cells in the basal region of the glandular epithelium of the dermal mucus glands (at protein level).

The protein localises to the cytoplasm. It localises to the secreted. In terms of biological role, in muscle, parvalbumin is thought to be involved in relaxation after contraction. It binds two calcium ions. The protein is Parvalbumin alpha of Rana temporaria (European common frog).